The primary structure comprises 426 residues: Serine--tRNA ligase (426 aa).

Residue threonine 233–glutamate 235 participates in L-serine binding. An ATP-binding site is contributed by arginine 264–glutamate 266. Residue glutamate 287 participates in L-serine binding. Glutamate 351–serine 354 serves as a coordination point for ATP. Serine 387 is an L-serine binding site.

It belongs to the class-II aminoacyl-tRNA synthetase family. Type-1 seryl-tRNA synthetase subfamily. In terms of assembly, homodimer. The tRNA molecule binds across the dimer.

It is found in the cytoplasm. It catalyses the reaction tRNA(Ser) + L-serine + ATP = L-seryl-tRNA(Ser) + AMP + diphosphate + H(+). It carries out the reaction tRNA(Sec) + L-serine + ATP = L-seryl-tRNA(Sec) + AMP + diphosphate + H(+). The protein operates within aminoacyl-tRNA biosynthesis; selenocysteinyl-tRNA(Sec) biosynthesis; L-seryl-tRNA(Sec) from L-serine and tRNA(Sec): step 1/1. Functionally, catalyzes the attachment of serine to tRNA(Ser). Is also able to aminoacylate tRNA(Sec) with serine, to form the misacylated tRNA L-seryl-tRNA(Sec), which will be further converted into selenocysteinyl-tRNA(Sec). The sequence is that of Serine--tRNA ligase from Ectopseudomonas mendocina (strain ymp) (Pseudomonas mendocina).